The sequence spans 636 residues: Molybdenum cofactor biosynthesis protein 1 (636 aa).

A molybdenum cofactor biosynthesis protein A region spans residues M1–I383. A disordered region spans residues R19 to R40. Phosphoserine is present on S64. The region spanning S64 to E279 is the Radical SAM core domain. Residue R73 coordinates GTP. 2 residues coordinate [4Fe-4S] cluster: C80 and C84. Y86 is an S-adenosyl-L-methionine binding site. C87 serves as a coordination point for [4Fe-4S] cluster. R123 is a binding site for GTP. S-adenosyl-L-methionine is bound at residue G127. T154 serves as a coordination point for GTP. S178 contacts S-adenosyl-L-methionine. The residue at position 198 (K198) is an N6-acetyllysine. GTP is bound at residue K215. M249 contacts S-adenosyl-L-methionine. [4Fe-4S] cluster contacts are provided by C312 and C315. R317–R319 is a binding site for GTP. C329 is a [4Fe-4S] cluster binding site. Positions Q414–A636 are molybdenum cofactor biosynthesis protein C. The tract at residues S444–H484 is disordered. K528 carries the N6-acetyllysine modification. Catalysis depends on D606, which acts as the For molybdenum cofactor biosynthesis protein C activity.

The protein in the C-terminal section; belongs to the MoaC family. In the N-terminal section; belongs to the radical SAM superfamily. MoaA family. Isoform Mocs1a and isoform Mocs1b probably form a heterooligomer. Requires [4Fe-4S] cluster as cofactor.

The catalysed reaction is GTP + AH2 + S-adenosyl-L-methionine = (8S)-3',8-cyclo-7,8-dihydroguanosine 5'-triphosphate + 5'-deoxyadenosine + L-methionine + A + H(+). The enzyme catalyses (8S)-3',8-cyclo-7,8-dihydroguanosine 5'-triphosphate = cyclic pyranopterin phosphate + diphosphate. The protein operates within cofactor biosynthesis; molybdopterin biosynthesis. Functionally, isoform Mocs1a and isoform Mocs1b probably form a complex that catalyzes the conversion of 5'-GTP to cyclic pyranopterin monophosphate (cPMP). Mocs1a catalyzes the cyclization of GTP to (8S)-3',8-cyclo-7,8-dihydroguanosine 5'-triphosphate and Mocs1b catalyzes the subsequent conversion of (8S)-3',8-cyclo-7,8-dihydroguanosine 5'-triphosphate to cPMP. In Mus musculus (Mouse), this protein is Molybdenum cofactor biosynthesis protein 1 (Mocs1).